We begin with the raw amino-acid sequence, 374 residues long: Probable dual-specificity RNA methyltransferase RlmN (374 aa).

Catalysis depends on E108, which acts as the Proton acceptor. In terms of domain architecture, Radical SAM core spans 114–361 (YSDRNTVCIS…SCTVRDTRGR (248 aa)). A disulfide bridge links C121 with C367. C128, C132, and C135 together coordinate [4Fe-4S] cluster. S-adenosyl-L-methionine-binding positions include 188–189 (GE), S222, 245–247 (SLH), and N324. C367 acts as the S-methylcysteine intermediate in catalysis.

This sequence belongs to the radical SAM superfamily. RlmN family. Requires [4Fe-4S] cluster as cofactor.

It localises to the cytoplasm. The enzyme catalyses adenosine(2503) in 23S rRNA + 2 reduced [2Fe-2S]-[ferredoxin] + 2 S-adenosyl-L-methionine = 2-methyladenosine(2503) in 23S rRNA + 5'-deoxyadenosine + L-methionine + 2 oxidized [2Fe-2S]-[ferredoxin] + S-adenosyl-L-homocysteine. The catalysed reaction is adenosine(37) in tRNA + 2 reduced [2Fe-2S]-[ferredoxin] + 2 S-adenosyl-L-methionine = 2-methyladenosine(37) in tRNA + 5'-deoxyadenosine + L-methionine + 2 oxidized [2Fe-2S]-[ferredoxin] + S-adenosyl-L-homocysteine. Its function is as follows. Specifically methylates position 2 of adenine 2503 in 23S rRNA and position 2 of adenine 37 in tRNAs. This Mycobacterium sp. (strain JLS) protein is Probable dual-specificity RNA methyltransferase RlmN.